The sequence spans 201 residues: Ribonuclease HII (201 aa).

Positions 12-201 constitute an RNase H type-2 domain; the sequence is GIVCGIDEVG…FAPVAQYMLF (190 aa). Positions 18, 19, and 113 each coordinate a divalent metal cation.

It belongs to the RNase HII family. Mn(2+) serves as cofactor. Requires Mg(2+) as cofactor.

It is found in the cytoplasm. The catalysed reaction is Endonucleolytic cleavage to 5'-phosphomonoester.. Its function is as follows. Endonuclease that specifically degrades the RNA of RNA-DNA hybrids. The sequence is that of Ribonuclease HII (rnhB) from Paramagnetospirillum magneticum (strain ATCC 700264 / AMB-1) (Magnetospirillum magneticum).